The following is a 278-amino-acid chain: Thiazole synthase (278 aa).

Catalysis depends on Lys-107, which acts as the Schiff-base intermediate with DXP. Residues Gly-168, 194–195 (AG), and 216–217 (AS) each bind 1-deoxy-D-xylulose 5-phosphate.

It belongs to the ThiG family. Homotetramer. Forms heterodimers with either ThiH or ThiS.

Its subcellular location is the cytoplasm. The enzyme catalyses [ThiS sulfur-carrier protein]-C-terminal-Gly-aminoethanethioate + 2-iminoacetate + 1-deoxy-D-xylulose 5-phosphate = [ThiS sulfur-carrier protein]-C-terminal Gly-Gly + 2-[(2R,5Z)-2-carboxy-4-methylthiazol-5(2H)-ylidene]ethyl phosphate + 2 H2O + H(+). The protein operates within cofactor biosynthesis; thiamine diphosphate biosynthesis. Functionally, catalyzes the rearrangement of 1-deoxy-D-xylulose 5-phosphate (DXP) to produce the thiazole phosphate moiety of thiamine. Sulfur is provided by the thiocarboxylate moiety of the carrier protein ThiS. In vitro, sulfur can be provided by H(2)S. The chain is Thiazole synthase from Corynebacterium jeikeium (strain K411).